The primary structure comprises 285 residues: Pantothenate synthetase (285 aa).

Residue 30 to 37 (MGNLHQGH) participates in ATP binding. Residue His37 is the Proton donor of the active site. (R)-pantoate is bound at residue Gln61. A beta-alanine-binding site is contributed by Gln61. 149–152 (GQKD) is an ATP binding site. Gln155 contributes to the (R)-pantoate binding site. ATP is bound by residues Val178 and 186–189 (LSSR).

This sequence belongs to the pantothenate synthetase family. As to quaternary structure, homodimer.

It is found in the cytoplasm. The enzyme catalyses (R)-pantoate + beta-alanine + ATP = (R)-pantothenate + AMP + diphosphate + H(+). The protein operates within cofactor biosynthesis; (R)-pantothenate biosynthesis; (R)-pantothenate from (R)-pantoate and beta-alanine: step 1/1. Its function is as follows. Catalyzes the condensation of pantoate with beta-alanine in an ATP-dependent reaction via a pantoyl-adenylate intermediate. This is Pantothenate synthetase from Aeromonas hydrophila subsp. hydrophila (strain ATCC 7966 / DSM 30187 / BCRC 13018 / CCUG 14551 / JCM 1027 / KCTC 2358 / NCIMB 9240 / NCTC 8049).